Consider the following 1052-residue polypeptide: Error-prone DNA polymerase (1052 aa).

Belongs to the DNA polymerase type-C family. DnaE2 subfamily.

It is found in the cytoplasm. It catalyses the reaction DNA(n) + a 2'-deoxyribonucleoside 5'-triphosphate = DNA(n+1) + diphosphate. DNA polymerase involved in damage-induced mutagenesis and translesion synthesis (TLS). It is not the major replicative DNA polymerase. The sequence is that of Error-prone DNA polymerase from Bordetella parapertussis (strain 12822 / ATCC BAA-587 / NCTC 13253).